We begin with the raw amino-acid sequence, 219 residues long: Octanoyltransferase (219 aa).

Positions 31-206 (TASADEIWLV…ECLRLMKASA (176 aa)) constitute a BPL/LPL catalytic domain. Substrate-binding positions include 70–77 (RGGQVTFH), 137–139 (SLG), and 150–152 (GLA). The active-site Acyl-thioester intermediate is Cys168.

Belongs to the LipB family.

It localises to the cytoplasm. The enzyme catalyses octanoyl-[ACP] + L-lysyl-[protein] = N(6)-octanoyl-L-lysyl-[protein] + holo-[ACP] + H(+). Its pathway is protein modification; protein lipoylation via endogenous pathway; protein N(6)-(lipoyl)lysine from octanoyl-[acyl-carrier-protein]: step 1/2. Its function is as follows. Catalyzes the transfer of endogenously produced octanoic acid from octanoyl-acyl-carrier-protein onto the lipoyl domains of lipoate-dependent enzymes. Lipoyl-ACP can also act as a substrate although octanoyl-ACP is likely to be the physiological substrate. In Sodalis glossinidius (strain morsitans), this protein is Octanoyltransferase.